A 423-amino-acid chain; its full sequence is Histidine--tRNA ligase 2 (423 aa).

The protein belongs to the class-II aminoacyl-tRNA synthetase family. Homodimer.

The protein resides in the cytoplasm. The catalysed reaction is tRNA(His) + L-histidine + ATP = L-histidyl-tRNA(His) + AMP + diphosphate + H(+). This is Histidine--tRNA ligase 2 from Bacillus cereus (strain ATCC 14579 / DSM 31 / CCUG 7414 / JCM 2152 / NBRC 15305 / NCIMB 9373 / NCTC 2599 / NRRL B-3711).